A 241-amino-acid chain; its full sequence is Dolichol-phosphate mannosyltransferase subunit 1 (241 aa).

Positions 13, 15, 17, 44, 46, 99, 100, 101, 128, 215, and 221 each coordinate GDP-alpha-D-mannose. D101 lines the Mg(2+) pocket. A Mn(2+)-binding site is contributed by D101.

It belongs to the glycosyltransferase 2 family. Requires Mg(2+) as cofactor. Mn(2+) serves as cofactor. It depends on Ca(2+) as a cofactor.

It localises to the endoplasmic reticulum. It carries out the reaction a di-trans,poly-cis-dolichyl phosphate + GDP-alpha-D-mannose = a di-trans,poly-cis-dolichyl beta-D-mannosyl phosphate + GDP. The protein operates within protein modification; protein glycosylation. Functionally, transfers mannose from GDP-mannose to dolichol monophosphate to form dolichol phosphate mannose (Dol-P-Man) which is the mannosyl donor in pathways leading to N-glycosylation, glycosyl phosphatidylinositol membrane anchoring, and O-mannosylation of proteins. The polypeptide is Dolichol-phosphate mannosyltransferase subunit 1 (Drosophila melanogaster (Fruit fly)).